The chain runs to 586 residues: MDPEAEEAQLRLEMELAKKAKADMSGLQRSSSLGLDHAGLYPLPLPPGWRSAPTSPLRTPSSPPPLQFPPAWAADVAGTSGSAAPEDDGPARNAGADEATAGSAPKNEDPARAAGADDGPTRSDYAAMMRMALAKFQDDDAAADDEEAASAVMEQAMTGLMDLTYRKAKPPELPYEFATRWPIPIAHDGTLQAEVMRDPVILPSGYSVDQTYQNNQKRQNPWTNTSTFTDHSLPYSLSVPNHLLRDMISAWCLDHSDLSPSTTSDTPSTPLEPSEEEQIQRILKLFSGNSASQREALKLIQLLTKTTKGVQPCLAKYADIIPVLINLRRKYKSSWTQDLEEERLTIILNLTMHRQNREILAGQNELAGAIKKIVKKAGNRGKRTSSLAKVASIVAVLSEFDMFRKRMLDAGGMKMLRGMLKIKDTEVITEAATAILALYADGEGEQPARFHEVPQMLLECHMFTDGILLLLDRLPKSPRVFRKICDQALQLVNIVMAEDASGPVTRKGILSAISLIYEIVERDVGKMNAVKNMEDFIERLRQLSSDRLPMQKMLQVERIIRTLSDAFPAPTVRGRCQEPSGSRLLA.

The interval 21–122 is disordered; the sequence is KADMSGLQRS…AAGADDGPTR (102 aa). A compositionally biased stretch (low complexity) spans 50 to 60; sequence RSAPTSPLRTP. In terms of domain architecture, U-box spans 182–258; sequence PIPIAHDGTL…SAWCLDHSDL (77 aa).

It carries out the reaction S-ubiquitinyl-[E2 ubiquitin-conjugating enzyme]-L-cysteine + [acceptor protein]-L-lysine = [E2 ubiquitin-conjugating enzyme]-L-cysteine + N(6)-ubiquitinyl-[acceptor protein]-L-lysine.. It participates in protein modification; protein ubiquitination. Possesses E3 ubiquitin-protein ligase in vitro. The chain is U-box domain-containing protein 73 (PUB73) from Oryza sativa subsp. japonica (Rice).